Consider the following 298-residue polypeptide: 4-diphosphocytidyl-2-C-methyl-D-erythritol kinase (298 aa).

Residue Lys-15 is part of the active site. 102–112 (PVAAGIGGGSS) is an ATP binding site. Asp-142 is an active-site residue.

This sequence belongs to the GHMP kinase family. IspE subfamily.

The enzyme catalyses 4-CDP-2-C-methyl-D-erythritol + ATP = 4-CDP-2-C-methyl-D-erythritol 2-phosphate + ADP + H(+). Its pathway is isoprenoid biosynthesis; isopentenyl diphosphate biosynthesis via DXP pathway; isopentenyl diphosphate from 1-deoxy-D-xylulose 5-phosphate: step 3/6. Its function is as follows. Catalyzes the phosphorylation of the position 2 hydroxy group of 4-diphosphocytidyl-2C-methyl-D-erythritol. The protein is 4-diphosphocytidyl-2-C-methyl-D-erythritol kinase of Hyphomonas neptunium (strain ATCC 15444).